A 123-amino-acid chain; its full sequence is Large ribosomal subunit protein uL14 (123 aa).

The protein belongs to the universal ribosomal protein uL14 family. In terms of assembly, part of the 50S ribosomal subunit. Forms a cluster with proteins L3 and L19. In the 70S ribosome, L14 and L19 interact and together make contacts with the 16S rRNA in bridges B5 and B8.

Functionally, binds to 23S rRNA. Forms part of two intersubunit bridges in the 70S ribosome. This Corynebacterium urealyticum (strain ATCC 43042 / DSM 7109) protein is Large ribosomal subunit protein uL14.